The primary structure comprises 208 residues: Protein-methionine-sulfoxide reductase heme-binding subunit MsrQ (208 aa).

6 consecutive transmembrane segments (helical) span residues 16–36 (IAVFVACLLPLVWYGARFVGG), 53–73 (WGLIFLLASLAATPARLLWGW), 82–102 (MVGLFAFFYVCLHLLSYIGLD), 118–138 (TYITVGMAALLLLVPLAVTST), 156–176 (LVYPAAVLGVLHYMLMVKADL), and 178–198 (EPLIFAGILGLLLAVRLVPAV).

Belongs to the MsrQ family. As to quaternary structure, heterodimer of a catalytic subunit (MsrP) and a heme-binding subunit (MsrQ). FMN is required as a cofactor. Heme b serves as cofactor.

It localises to the cell inner membrane. Its function is as follows. Part of the MsrPQ system that repairs oxidized periplasmic proteins containing methionine sulfoxide residues (Met-O), using respiratory chain electrons. Thus protects these proteins from oxidative-stress damage caused by reactive species of oxygen and chlorine generated by the host defense mechanisms. MsrPQ is essential for the maintenance of envelope integrity under bleach stress, rescuing a wide series of structurally unrelated periplasmic proteins from methionine oxidation. MsrQ provides electrons for reduction to the reductase catalytic subunit MsrP, using the quinone pool of the respiratory chain. This Rhodospirillum rubrum (strain ATCC 11170 / ATH 1.1.1 / DSM 467 / LMG 4362 / NCIMB 8255 / S1) protein is Protein-methionine-sulfoxide reductase heme-binding subunit MsrQ.